Reading from the N-terminus, the 238-residue chain is ATP synthase subunit a, chloroplastic (238 aa).

A run of 5 helical transmembrane segments spans residues 27–47 (GQVL…SFLG), 86–106 (VPFL…GALL), 125–145 (INTT…AGIS), 190–210 (LVVG…IMLL), and 211–231 (GVFT…AYIN).

It belongs to the ATPase A chain family. In terms of assembly, F-type ATPases have 2 components, F(1) - the catalytic core - and F(0) - the membrane proton channel. F(1) has five subunits: alpha(3), beta(3), gamma(1), delta(1), epsilon(1). F(0) has four main subunits: a(1), b(1), b'(1) and c(10-14). The alpha and beta chains form an alternating ring which encloses part of the gamma chain. F(1) is attached to F(0) by a central stalk formed by the gamma and epsilon chains, while a peripheral stalk is formed by the delta, b and b' chains.

The protein localises to the plastid. It is found in the chloroplast thylakoid membrane. In terms of biological role, f(1)F(0) ATP synthase produces ATP from ADP in the presence of a proton or sodium gradient. F-type ATPases consist of two structural domains, F(1) containing the extramembraneous catalytic core and F(0) containing the membrane proton channel, linked together by a central stalk and a peripheral stalk. During catalysis, ATP synthesis in the catalytic domain of F(1) is coupled via a rotary mechanism of the central stalk subunits to proton translocation. In Chlamydomonas reinhardtii (Chlamydomonas smithii), this protein is ATP synthase subunit a, chloroplastic.